Here is a 146-residue protein sequence, read N- to C-terminus: Hemoglobin subunit beta (146 aa).

Residues 2–146 (FLTAEEKGLV…VASALAHRYH (145 aa)) enclose the Globin domain. At serine 44 the chain carries Phosphoserine. Lysine 59 carries the N6-acetyllysine modification. Residue histidine 63 participates in heme b binding. Lysine 82 carries the N6-acetyllysine modification. Histidine 92 contributes to the heme b binding site. Position 93 is an S-nitrosocysteine (cysteine 93).

This sequence belongs to the globin family. In terms of assembly, heterotetramer of two alpha chains and two beta chains. As to expression, red blood cells.

Its function is as follows. Involved in oxygen transport from the lung to the various peripheral tissues. The sequence is that of Hemoglobin subunit beta (HBB) from Paguma larvata (Masked palm civet).